The sequence spans 59 residues: Sperm protamine P1-type (59 aa).

The disordered stretch occupies residues 1-59; sequence MARYRRNRSRSRSRRRRRRRGGRGGRRGRRRRRHGQRRRGRRGRERTRRRRRRRRRSSS.

The protein belongs to the protamine P1 family. Testis.

The protein resides in the nucleus. It localises to the chromosome. Functionally, protamines substitute for histones in the chromatin of sperm during the haploid phase of spermatogenesis. They compact sperm DNA into a highly condensed, stable and inactive complex. The protein is Sperm protamine P1-type of Chrysemys picta bellii (Western painted turtle).